We begin with the raw amino-acid sequence, 1838 residues long: Lysine-specific demethylase 5 (1838 aa).

A disordered region spans residues 1-150 (MSAKTEADNT…SSNKFDQGKN (150 aa)). Residues 15–31 (SGGGGVGSGTSSGGGAS) show a composition bias toward gly residues. The segment covering 45–56 (RNSTGNGTNSGS) has biased composition (low complexity). A compositionally biased stretch (polar residues) spans 136–145 (HTQPHSSNKF). The 42-residue stretch at 161–202 (CPVFRPTTEEFKNPLAYISKIRSIAEKCGIAKILPPATWSPP) folds into the JmjN domain. In terms of domain architecture, ARID spans 226–316 (TRVKLNFLDQ…ILHPFEVYTS (91 aa)). Low complexity predominate over residues 321-333 (GPTPTSSGSGSTP). 2 disordered regions span residues 321–380 (GPTP…GLSG) and 416–437 (GSPL…KGGE). A Phosphothreonine modification is found at Thr-323. Composition is skewed to polar residues over residues 351 to 361 (TRQQIAPPNET), 369 to 380 (FGNSNASCGLSG), and 416 to 430 (GSPL…TRGA). The PHD-type 1 zinc finger occupies 448-498 (KYICHICNRGDVEESMLLCDGCDDSYHTFCLLPPLTSIPKGEWLCPRCVVE). Residues 591 to 757 (EYAESSWNLN…MGRECVNHYS (167 aa)) form the JmjC domain. Fe cation contacts are provided by His-637, Asp-640, and His-725. Residues 960–1049 (VRTRSDHNQE…LRIELQQLDL (90 aa)) adopt a coiled-coil conformation. The PHD-type 2 zinc-finger motif lies at 1293–1354 (DMFCLCKSEF…KWLCPSCVRS (62 aa)). Residues 1401 to 1462 (SSPDVSAAQE…SDADDDDDED (62 aa)) form a disordered region. The segment covering 1407-1417 (AAQEAIMAQQQ) has biased composition (low complexity). Phosphoserine is present on residues Ser-1422 and Ser-1433. The segment covering 1453 to 1462 (SDADDDDDED) has biased composition (acidic residues). Ser-1474 carries the post-translational modification Phosphoserine. A disordered region spans residues 1548–1751 (YMQRQRQQHT…QRSQQAAQED (204 aa)). 5 stretches are compositionally biased toward low complexity: residues 1576–1595 (NSPN…SNSG), 1624–1650 (GKKG…PGAD), 1658–1667 (ANGGNTNSST), 1674–1683 (SATTTPTPGS), and 1692–1736 (STTA…ATGG). 2 positions are modified to phosphoserine: Ser-1635 and Ser-1640. The segment at 1753–1808 (EEECRAENCHKPTGREVDWVQCDGGCNEWFHMYCVGLNRSQIKPDDDYICIRCTKT) adopts a PHD-type 3 zinc-finger fold. The interval 1814 to 1838 (QGSGHSMSVASTTTPGKQRAVQSAR) is disordered.

It belongs to the JARID1 histone demethylase family. In terms of assembly, interacts with Myc. Part of a complex containing Lid, Myc and Ash2. It depends on Fe(2+) as a cofactor.

Its subcellular location is the nucleus. It carries out the reaction N(6),N(6),N(6)-trimethyl-L-lysyl(4)-[histone H3] + 3 2-oxoglutarate + 3 O2 = L-lysyl(4)-[histone H3] + 3 formaldehyde + 3 succinate + 3 CO2. Its activity is regulated as follows. Inhibited by Myc. Histone demethylase that specifically demethylates 'Lys-4' of histone H3, thereby playing a central role in histone code. Does not demethylate histone H3 'Lys-9', H3 'Lys-27', H3 'Lys-36', H3 'Lys-79' or H4 'Lys-20'. Specifically demethylates trimethylated H3 'Lys-4'. Required for the correct regulation of homeotic genes during development. Plays a role in the regulation of the circadian rhythm and in maintaining the normal periodicity of the circadian clock. Regulates the expression of clock-controlled genes including tim, per and cry. This chain is Lysine-specific demethylase 5, found in Drosophila melanogaster (Fruit fly).